Consider the following 124-residue polypeptide: Protein MT1307 (124 aa).

The tat-type signal signal peptide spans 1-35; sequence MTTMITLRRRFAVAVAGVATAAATTVTLAPAPANA.

It to M.tuberculosis Rv1813c. Predicted to be exported by the Tat system. The position of the signal peptide cleavage has not been experimentally proven.

The protein is Protein MT1307 of Mycobacterium tuberculosis (strain CDC 1551 / Oshkosh).